The primary structure comprises 412 residues: Yellow-related salivary protein LJM17 (412 aa).

Positions 1–18 (MRFFFVFLAIVLFQGIHG) are cleaved as a signal peptide. Asparagine 29 is a glycosylation site (N-linked (GlcNAc...) asparagine).

The protein belongs to the major royal jelly protein family. In terms of tissue distribution, salivary gland.

The protein resides in the secreted. Its function is as follows. Probably modulates blood feeding of sand flies on vertebrate species by binding and sequestering different mediators involved in the host response. Binds biogenic amines. Binds serotonin with high affinity. Binds noradrenaline but not adrenaline. Binds dopamine and octopamine. Binds histamine. Inhibits host smooth muscle contraction induced by histamine in bioassay with guinea pig ileum. Immunogenic; elicits antibody production in the host. Functions as a chemoattractant for host neutrophils; likely acts through a G-protein-coupled receptor and effect is dependent on calcium influx. This chain is Yellow-related salivary protein LJM17, found in Lutzomyia longipalpis (Sand fly).